A 313-amino-acid chain; its full sequence is tRNA (guanine-N(7)-)-methyltransferase (313 aa).

S-adenosyl-L-methionine contacts are provided by Glu-33, Glu-58, and Asp-85. Residues Lys-112, Asp-144, and 177–180 contribute to the substrate site; that span reads TRYE.

It belongs to the class I-like SAM-binding methyltransferase superfamily. TrmB family.

It carries out the reaction guanosine(46) in tRNA + S-adenosyl-L-methionine = N(7)-methylguanosine(46) in tRNA + S-adenosyl-L-homocysteine. It participates in tRNA modification; N(7)-methylguanine-tRNA biosynthesis. Its function is as follows. Catalyzes the formation of N(7)-methylguanine at position 46 (m7G46) in tRNA. The chain is tRNA (guanine-N(7)-)-methyltransferase from Thermotoga maritima (strain ATCC 43589 / DSM 3109 / JCM 10099 / NBRC 100826 / MSB8).